Here is a 608-residue protein sequence, read N- to C-terminus: Zinc finger protein 652 (608 aa).

Serine 57 is modified (phosphoserine). A disordered region spans residues 61 to 232 (VLADTKMSKP…KRATKEAKAP (172 aa)). Positions 71–97 (HLHETEEQPYFREPRAVSDVHTVKEDR) are enriched in basic and acidic residues. 2 stretches are compositionally biased toward acidic residues: residues 98-108 (ENSDDTEEEEE) and 151-162 (EEDEEETEEEAT). Serine 100 is modified (phosphoserine). Threonine 103 carries the post-translational modification Phosphothreonine. Residues 194–208 (AASAAAATTSPAPRT) show a composition bias toward low complexity. 2 positions are modified to phosphoserine: serine 196 and serine 203. The segment at 244–267 (LTCEKCPRVFNTRWYLEKHMNVTH) adopts a C2H2-type 1 zinc-finger fold. A C2H2-type 2; degenerate zinc finger spans residues 271-293 (QICDKCGKKFVLESELSLHQQTD). C2H2-type zinc fingers lie at residues 298–321 (IQCVSCNKSFKKLWSLHEHIKIVH), 328–350 (FACEICEKKFYTMAHVRKHMVAH), 356–378 (FTCETCGKSFKRSMSLKVHSLQH), 384–406 (FRCENCDERFQYKYQLRSHMSIH), 412–434 (FMCQWCGKDFNMKQYFDEHMKTH), and 440–462 (FICEICGKSFTSRPNMKRHRRTH). The segment at 468–491 (YPCDVCGQRFRFSNMLKAHKEKCF) adopts a C2H2-type 9; degenerate zinc-finger fold. The segment at 497–608 (VNVPPAVQIP…KNSAAPAQHH (112 aa)) is mediates interaction with CBFA2T3.

It belongs to the krueppel C2H2-type zinc-finger protein family. In terms of assembly, interacts with CBFA2T3.

The protein resides in the nucleus. In terms of biological role, functions as a transcriptional repressor. This Mus musculus (Mouse) protein is Zinc finger protein 652 (Znf652).